The sequence spans 276 residues: Secretagogin (276 aa).

EF-hand domains lie at 12 to 47 (LDAA…VLTK), 58 to 93 (NVWK…EDEN), 105 to 140 (DSSV…LFLH), 149 to 184 (KLEE…QENF), 197 to 232 (ERKR…MMEL), and 240 to 276 (VDLD…KINP). Residues D71, S73, D75, H77, E82, D118, D120, S122, E129, D162, N164, D166, R168, D173, D210, S212, T214, E221, D254, N256, D258, K260, and E265 each contribute to the Ca(2+) site.

It is found in the cytoplasm. Its subcellular location is the secreted. The protein resides in the cytoplasmic vesicle. The protein localises to the secretory vesicle membrane. The chain is Secretagogin (SCGN) from Sus scrofa (Pig).